The primary structure comprises 227 residues: ATP-dependent dethiobiotin synthetase BioD (227 aa).

Position 13-18 (13-18) interacts with ATP; sequence DIGKTY. Thr-17 contacts Mg(2+). The active site involves Lys-38. Position 42 (Ser-42) interacts with substrate. Residues Asp-55, 116 to 119, and 179 to 180 each bind ATP; these read EGSG and NN. Mg(2+)-binding residues include Asp-55 and Glu-116.

It belongs to the dethiobiotin synthetase family. Homodimer. Requires Mg(2+) as cofactor.

The protein localises to the cytoplasm. It catalyses the reaction (7R,8S)-7,8-diammoniononanoate + CO2 + ATP = (4R,5S)-dethiobiotin + ADP + phosphate + 3 H(+). Its pathway is cofactor biosynthesis; biotin biosynthesis; biotin from 7,8-diaminononanoate: step 1/2. Its function is as follows. Catalyzes a mechanistically unusual reaction, the ATP-dependent insertion of CO2 between the N7 and N8 nitrogen atoms of 7,8-diaminopelargonic acid (DAPA, also called 7,8-diammoniononanoate) to form a ureido ring. This is ATP-dependent dethiobiotin synthetase BioD from Clostridium botulinum (strain Eklund 17B / Type B).